We begin with the raw amino-acid sequence, 154 residues long: Cysteine-rich DPF motif domain-containing protein 1 (154 aa).

It belongs to the CDPF1 family.

The sequence is that of Cysteine-rich DPF motif domain-containing protein 1 from Drosophila melanogaster (Fruit fly).